A 1142-amino-acid chain; its full sequence is Serine/threonine-protein kinase dst2 (1142 aa).

The region spanning 20–276 (FELIEEIAEG…ATELLKHPFV (257 aa)) is the Protein kinase domain. ATP is bound by residues 26–34 (IAEGSFGTV) and K49. D141 serves as the catalytic Proton acceptor. Residues 300-322 (LEEGGDEDEDSSEQEGMDSDDKD) are compositionally biased toward acidic residues. Disordered stretches follow at residues 300–492 (LEEG…KTLE), 515–636 (KKQQ…KSTP), 744–768 (ETNHLKERQVTETEQHIKQMTTEQR), 939–974 (SIEEQQKERLTLQQEEHRIQQESLKKQEQKKKGSVT), and 1040–1142 (EEQK…DNQD). Basic and acidic residues predominate over residues 323–336 (SDLKKSVGTSDRKS). Residues 355–365 (QRKSTGQNLQL) show a composition bias toward polar residues. The span at 371–390 (QQSSSSSSSSSSSLSSQSLQ) shows a compositional bias: low complexity. A compositionally biased stretch (polar residues) spans 391–413 (PQAVNKSTDRLSANINGSNTKSN). The segment covering 421 to 452 (AAASASASSLNLSTGNLQQSLSGSGSITTNSG) has biased composition (low complexity). Residues 467 to 477 (SSDDRSPDIRT) show a composition bias toward basic and acidic residues. Over residues 541 to 554 (KQNAAKATQQQKQS) the composition is skewed to low complexity. Basic and acidic residues-rich tracts occupy residues 555-588 (AAKEEKIQKQHKVEKETLSRQQKADREQLLKKNQ), 597-635 (KVTDQQKQQQREFKDQQKQQQKQKEHEFKDQNKVLDKST), 744-760 (ETNHLKERQVTETEQHI), and 939-969 (SIEEQQKERLTLQQEEHRIQQESLKKQEQKK). Residues 716 to 1050 (QEYHTVLREN…EQKKSKLKLK (335 aa)) are a coiled coil. Residues 1068–1091 (TGTTPPSTSSNQKTLNNSNGASSN) are compositionally biased toward low complexity.

The protein belongs to the protein kinase superfamily. STE Ser/Thr protein kinase family. STE20 subfamily. It depends on Mg(2+) as a cofactor.

The catalysed reaction is L-seryl-[protein] + ATP = O-phospho-L-seryl-[protein] + ADP + H(+). The enzyme catalyses L-threonyl-[protein] + ATP = O-phospho-L-threonyl-[protein] + ADP + H(+). The chain is Serine/threonine-protein kinase dst2 from Dictyostelium discoideum (Social amoeba).